A 239-amino-acid polypeptide reads, in one-letter code: tRNA (guanine-N(7)-)-methyltransferase (239 aa).

The S-adenosyl-L-methionine site is built by glutamate 69, glutamate 94, aspartate 121, and aspartate 144. Aspartate 144 is a catalytic residue. A substrate-binding site is contributed by lysine 148. An interaction with RNA region spans residues 150–155 (RHNKRR). Residues aspartate 180 and 217-220 (TKFE) each bind substrate.

The protein belongs to the class I-like SAM-binding methyltransferase superfamily. TrmB family. In terms of assembly, monomer.

It catalyses the reaction guanosine(46) in tRNA + S-adenosyl-L-methionine = N(7)-methylguanosine(46) in tRNA + S-adenosyl-L-homocysteine. Its pathway is tRNA modification; N(7)-methylguanine-tRNA biosynthesis. In terms of biological role, catalyzes the formation of N(7)-methylguanine at position 46 (m7G46) in tRNA. The polypeptide is tRNA (guanine-N(7)-)-methyltransferase (Yersinia pseudotuberculosis serotype O:1b (strain IP 31758)).